Reading from the N-terminus, the 130-residue chain is Type VII secretion system extracellular protein C (130 aa).

This sequence belongs to the EsxC family. As to quaternary structure, forms both homodimers and heterodimers with EsxA. Homodimerization is calcium-dependent.

The protein localises to the secreted. The chain is Type VII secretion system extracellular protein C from Staphylococcus aureus (strain USA300).